The chain runs to 841 residues: ATP-dependent helicase Lhr-Core (841 aa).

ATP-binding residues include Gln39, Lys62, Thr63, Asp181, Glu182, Ile352, Arg369, and His372. Positions Ile43–Tyr234 constitute a Helicase ATP-binding domain. A DEVH box motif is present at residues Asp181–His184. A Helicase C-terminal domain is found at Arg266–Asp416. The segment at Val417–Pro500 is WH domain. A domain 4 region spans residues Asp501–Lys841.

It belongs to the Lhr helicase family. Lhr-Core subfamily. Monomer.

The enzyme catalyses Couples ATP hydrolysis with the unwinding of duplex DNA by translocating in the 3'-5' direction.. The catalysed reaction is ATP + H2O = ADP + phosphate + H(+). Its function is as follows. DNA helicase that loads on single-stranded (ss)DNA and translocates in a 3'-5' direction, probably involved in DNA repair. Archaeal orthologs have double-stranded (ds)DNA and/or RNA:DNA helicase activity. This chain is ATP-dependent helicase Lhr-Core, found in Methanocaldococcus jannaschii (strain ATCC 43067 / DSM 2661 / JAL-1 / JCM 10045 / NBRC 100440) (Methanococcus jannaschii).